Here is a 97-residue protein sequence, read N- to C-terminus: Sorbitol dehydrogenase (97 aa).

Cys44 contacts Zn(2+). Tyr50 serves as a coordination point for substrate. Zn(2+) is bound by residues His69 and Glu70.

The protein belongs to the zinc-containing alcohol dehydrogenase family. Homotetramer. Zn(2+) is required as a cofactor.

The protein localises to the mitochondrion membrane. It is found in the cell projection. The protein resides in the cilium. Its subcellular location is the flagellum. It carries out the reaction xylitol + NAD(+) = D-xylulose + NADH + H(+). The enzyme catalyses L-iditol + NAD(+) = keto-L-sorbose + NADH + H(+). It catalyses the reaction keto-D-fructose + NADH + H(+) = D-sorbitol + NAD(+). Functionally, polyol dehydrogenase that catalyzes the reversible NAD(+)-dependent oxidation of various sugar alcohols. Is active with xylitol, L-iditol and D-sorbitol (D-glucitol) as substrates, leading to the C2-oxidized products D-xylulose, L-sorbose and D-fructose, respectively. Is a key enzyme in the polyol pathway that interconverts glucose and fructose via sorbitol, which constitutes an important alternate route for glucose metabolism. May play a role in sperm motility by using sorbitol as an alternative energy source for sperm motility. This Sus scrofa (Pig) protein is Sorbitol dehydrogenase (SORD).